The following is a 387-amino-acid chain: 3-ketoacyl-CoA thiolase (387 aa).

The active-site Acyl-thioester intermediate is the Cys-91. Catalysis depends on proton acceptor residues His-343 and Cys-373.

Belongs to the thiolase-like superfamily. Thiolase family. In terms of assembly, heterotetramer of two alpha chains (FadB) and two beta chains (FadA).

The protein localises to the cytoplasm. It carries out the reaction an acyl-CoA + acetyl-CoA = a 3-oxoacyl-CoA + CoA. Its pathway is lipid metabolism; fatty acid beta-oxidation. Its function is as follows. Catalyzes the final step of fatty acid oxidation in which acetyl-CoA is released and the CoA ester of a fatty acid two carbons shorter is formed. This is 3-ketoacyl-CoA thiolase from Shewanella baltica (strain OS185).